The following is a 363-amino-acid chain: Ribosome-binding ATPase YchF (363 aa).

The 254-residue stretch at 3 to 256 (FKCGIVGLPN…LDDEERDEFM (254 aa)) folds into the OBG-type G domain. 12–17 (NVGKST) is an ATP binding site. Residues S16 and T36 each contribute to the Mg(2+) site. The TGS domain maps to 278–361 (NLQTYFTAGV…KDGDVMNFLF (84 aa)).

This sequence belongs to the TRAFAC class OBG-HflX-like GTPase superfamily. OBG GTPase family. YchF/OLA1 subfamily. The cofactor is Mg(2+).

In terms of biological role, ATPase that binds to both the 70S ribosome and the 50S ribosomal subunit in a nucleotide-independent manner. The protein is Ribosome-binding ATPase YchF of Escherichia coli O157:H7.